The sequence spans 496 residues: Cobyric acid synthase (496 aa).

The 191-residue stretch at 252–442 (DLAVAVIRLP…LHGCFDSDTY (191 aa)) folds into the GATase cobBQ-type domain. Cys-333 functions as the Nucleophile in the catalytic mechanism. The active site involves His-434.

Belongs to the CobB/CobQ family. CobQ subfamily.

It functions in the pathway cofactor biosynthesis; adenosylcobalamin biosynthesis. Functionally, catalyzes amidations at positions B, D, E, and G on adenosylcobyrinic A,C-diamide. NH(2) groups are provided by glutamine, and one molecule of ATP is hydrogenolyzed for each amidation. The polypeptide is Cobyric acid synthase (Desulforudis audaxviator (strain MP104C)).